Here is a 379-residue protein sequence, read N- to C-terminus: Protein RecA (379 aa).

79-86 contributes to the ATP binding site; that stretch reads GPESSGKT.

Belongs to the RecA family.

Its subcellular location is the cytoplasm. Functionally, can catalyze the hydrolysis of ATP in the presence of single-stranded DNA, the ATP-dependent uptake of single-stranded DNA by duplex DNA, and the ATP-dependent hybridization of homologous single-stranded DNAs. It interacts with LexA causing its activation and leading to its autocatalytic cleavage. This is Protein RecA from Streptococcus uberis (strain ATCC BAA-854 / 0140J).